A 601-amino-acid polypeptide reads, in one-letter code: MQQQSNIRNFAIIAHIDHGKSTLADRLIEYCNALEAREMCQQVLDSMDIEKERGITIKAQTVRLVYKADDGCVYHLNLMDTPGHVDFAYEVSRSLAACESSLLVVDASQGVEAQTLANLYQAVDNNHKILIVLNKIDLPAANPQQVQQQIEDVIGIDASDALMISAKIGLGIKDVLQAIVTKLPSPNGDSQSQLKALLIDSWYDSYLGVVILVRVVDGKIEKGMRIRMCSNNAVYTVENVGFFSPKKQISGVLYTGEIGFVTAAIKQVADCRVGDTITDDKKPCAQILPGFKPNLPVVFCGLYPSDASQFNHLKDSLQKLRLNDASFEFEQESSGALGFGFRCGFLGLLHLEIIQERLEREFDLDMITTAPSVMYKVYLNTGKVIDVHNPADLPEMQKIKSMSEPWVEATIFIPDQYLGAILGLCTEKRGVQVDLTYVNGRAKLVYLLPLNEIVFDFYDKLKSYSKGYASFDWQMNSYKQSDLIKLSILVNGNPVDALSTIVHRSKAEFRGRELCKRLKDLIPAHLFQIAIQAAIGSRIIARETIRALRKDVLAKCYGGDITRKRKLLEKQKAGKKRMRNIGNVEIPQSAFIAALKITNKD.

The tr-type G domain occupies 5–187 (SNIRNFAIIA…AIVTKLPSPN (183 aa)). GTP-binding positions include 17–22 (DHGKST) and 134–137 (NKID).

Belongs to the TRAFAC class translation factor GTPase superfamily. Classic translation factor GTPase family. LepA subfamily.

Its subcellular location is the cell inner membrane. It carries out the reaction GTP + H2O = GDP + phosphate + H(+). Functionally, required for accurate and efficient protein synthesis under certain stress conditions. May act as a fidelity factor of the translation reaction, by catalyzing a one-codon backward translocation of tRNAs on improperly translocated ribosomes. Back-translocation proceeds from a post-translocation (POST) complex to a pre-translocation (PRE) complex, thus giving elongation factor G a second chance to translocate the tRNAs correctly. Binds to ribosomes in a GTP-dependent manner. The polypeptide is Elongation factor 4 (Orientia tsutsugamushi (strain Ikeda) (Rickettsia tsutsugamushi)).